The following is a 301-amino-acid chain: Phosphoglycolate phosphatase 2 (301 aa).

Catalysis depends on aspartate 19, which acts as the Nucleophile.

Belongs to the HAD-like hydrolase superfamily. CbbY/CbbZ/Gph/YieH family.

It carries out the reaction 2-phosphoglycolate + H2O = glycolate + phosphate. In terms of biological role, dephosphorylates 2-phosphoglycolate, but does not contribute to photorespiratory metabolism. The protein is Phosphoglycolate phosphatase 2 (PGLP2) of Arabidopsis thaliana (Mouse-ear cress).